Reading from the N-terminus, the 304-residue chain is Mitochondrial RNA-splicing protein MRS4 (304 aa).

Solcar repeat units lie at residues 21–108 (APLH…CKAR), 118–200 (HQPM…ASKF), and 207–300 (YNPL…AKHF). The next 6 membrane-spanning stretches (helical) occupy residues 23–41 (LHSQ…HSLM), 83–102 (GVQS…FGTY), 120–139 (PMKT…ALMN), 175–194 (SYPT…FMIY), 209–228 (PLIH…ALTT), and 275–288 (GLKP…PATA).

Belongs to the mitochondrial carrier (TC 2.A.29) family.

It is found in the mitochondrion inner membrane. MRS4 suppresses a mitochondrial splice defect in the first intron of the COB gene. It may act as a carrier, exerting its suppressor activity via modulation of solute concentrations in the mitochondrion (possibly of cations). Not essential. In Saccharomyces cerevisiae (strain ATCC 204508 / S288c) (Baker's yeast), this protein is Mitochondrial RNA-splicing protein MRS4 (MRS4).